Here is a 149-residue protein sequence, read N- to C-terminus: Large ribosomal subunit protein uL15A (149 aa).

Positions 21 to 40 (RIGKHRKQRGGRGNAGGQHH) are disordered.

This sequence belongs to the universal ribosomal protein uL15 family. Component of the large ribosomal subunit.

It is found in the cytoplasm. The protein resides in the cytosol. It localises to the endoplasmic reticulum. In terms of biological role, component of the large ribosomal subunit. The ribosome is a large ribonucleoprotein complex responsible for the synthesis of proteins in the cell. In Entamoeba histolytica (strain ATCC 30459 / HM-1:IMSS / ABRM), this protein is Large ribosomal subunit protein uL15A (rpl27a-1).